Here is a 407-residue protein sequence, read N- to C-terminus: 12S rRNA N(4)-cytidine methyltransferase METTL15 (407 aa).

Residues glycine 100–histidine 102, aspartate 119, phenylalanine 146, aspartate 169, and glutamine 176 contribute to the S-adenosyl-L-methionine site. Serine 358 carries the phosphoserine modification.

The protein belongs to the methyltransferase superfamily. RsmH family.

Its subcellular location is the mitochondrion matrix. The catalysed reaction is cytidine(839) in 12S rRNA + S-adenosyl-L-methionine = N(4)-methylcytidine(839) in 12S rRNA + S-adenosyl-L-homocysteine + H(+). N4-methylcytidine (m4C) methyltransferase responsible for the methylation of position C839 in mitochondrial 12S rRNA. Involved in the stabilization of 12S rRNA folding, therefore facilitating the assembly of the mitochondrial small ribosomal subunits. This Pongo abelii (Sumatran orangutan) protein is 12S rRNA N(4)-cytidine methyltransferase METTL15 (METTL15).